The sequence spans 393 residues: Acetyl-CoA acetyltransferase (393 aa).

Cys88 (acyl-thioester intermediate) is an active-site residue. Residues His349 and Cys379 each act as proton acceptor in the active site.

The protein belongs to the thiolase-like superfamily. Thiolase family. In terms of assembly, homotetramer.

The protein localises to the cytoplasm. It carries out the reaction 2 acetyl-CoA = acetoacetyl-CoA + CoA. Its pathway is biopolymer metabolism; poly-(R)-3-hydroxybutanoate biosynthesis. Its activity is regulated as follows. The condensation reaction is inhibited by free CoA. The cleavage reaction is characterized by substrate inhibition by acetoacetyl-CoA, which is partially relieved by free CoA. Catalyzes the condensation of two acetyl-coA units to form acetoacetyl-CoA. Is involved in the biosynthesis of polyhydroxybutyrate (PHB), which is accumulated as an intracellular energy reserve material when cells grow under conditions of nutrient limitation. Also catalyzes the reverse reaction, i.e. the cleavage of acetoacetyl-CoA, and is therefore also involved in the reutilization of PHB. The protein is Acetyl-CoA acetyltransferase of Cupriavidus necator (strain ATCC 17699 / DSM 428 / KCTC 22496 / NCIMB 10442 / H16 / Stanier 337) (Ralstonia eutropha).